A 128-amino-acid chain; its full sequence is Probable 4-amino-4-deoxy-L-arabinose-phosphoundecaprenol flippase subunit ArnF (128 aa).

Residues 1-2 (MG) are Cytoplasmic-facing. The helical transmembrane segment at 3-23 (LMWGLFSVIIASVAQLSLGFA) threads the bilayer. Topologically, residues 24–35 (ASHLPPMTHLWD) are periplasmic. A helical membrane pass occupies residues 36 to 56 (FIATLLAFGLDARILLLGLLG). The Cytoplasmic portion of the chain corresponds to 57–77 (YLLSVFCWYKTLHKLALSKAY). A helical transmembrane segment spans residues 78 to 98 (ALLSMSYVLVWIASMVLPGWG). At 99–100 (GT) the chain is on the periplasmic side. A helical transmembrane segment spans residues 101-121 (FSLKALLGVACIMSGLMLIFL). Topologically, residues 122 to 128 (PTTKQRY) are cytoplasmic.

Belongs to the ArnF family. Heterodimer of ArnE and ArnF.

The protein localises to the cell inner membrane. Its pathway is bacterial outer membrane biogenesis; lipopolysaccharide biosynthesis. In terms of biological role, translocates 4-amino-4-deoxy-L-arabinose-phosphoundecaprenol (alpha-L-Ara4N-phosphoundecaprenol) from the cytoplasmic to the periplasmic side of the inner membrane. This Shigella dysenteriae serotype 1 (strain Sd197) protein is Probable 4-amino-4-deoxy-L-arabinose-phosphoundecaprenol flippase subunit ArnF.